A 485-amino-acid chain; its full sequence is Glutamate--tRNA ligase 1 (485 aa).

The 'HIGH' region motif lies at 9–19; that stretch reads PSPTGHLHIGG. Residues 250 to 254 carry the 'KMSKS' region motif; the sequence is KMSKR. Lys253 is a binding site for ATP.

This sequence belongs to the class-I aminoacyl-tRNA synthetase family. Glutamate--tRNA ligase type 1 subfamily. As to quaternary structure, monomer.

It localises to the cytoplasm. It catalyses the reaction tRNA(Glu) + L-glutamate + ATP = L-glutamyl-tRNA(Glu) + AMP + diphosphate. Catalyzes the attachment of glutamate to tRNA(Glu) in a two-step reaction: glutamate is first activated by ATP to form Glu-AMP and then transferred to the acceptor end of tRNA(Glu). This is Glutamate--tRNA ligase 1 from Caldicellulosiruptor saccharolyticus (strain ATCC 43494 / DSM 8903 / Tp8T 6331).